The following is an 80-amino-acid chain: NAD(P)H-quinone oxidoreductase subunit O (80 aa).

This sequence belongs to the complex I NdhO subunit family. As to quaternary structure, NDH-1 can be composed of about 15 different subunits; different subcomplexes with different compositions have been identified which probably have different functions.

It is found in the cellular thylakoid membrane. The enzyme catalyses a plastoquinone + NADH + (n+1) H(+)(in) = a plastoquinol + NAD(+) + n H(+)(out). It carries out the reaction a plastoquinone + NADPH + (n+1) H(+)(in) = a plastoquinol + NADP(+) + n H(+)(out). NDH-1 shuttles electrons from an unknown electron donor, via FMN and iron-sulfur (Fe-S) centers, to quinones in the respiratory and/or the photosynthetic chain. The immediate electron acceptor for the enzyme in this species is believed to be plastoquinone. Couples the redox reaction to proton translocation, and thus conserves the redox energy in a proton gradient. Cyanobacterial NDH-1 also plays a role in inorganic carbon-concentration. The protein is NAD(P)H-quinone oxidoreductase subunit O of Prochlorococcus marinus (strain MIT 9515).